We begin with the raw amino-acid sequence, 72 residues long: DNA-directed RNA polymerase subunit omega (72 aa).

The protein belongs to the RNA polymerase subunit omega family. The RNAP catalytic core consists of 2 alpha, 1 beta, 1 beta' and 1 omega subunit. When a sigma factor is associated with the core the holoenzyme is formed, which can initiate transcription.

The enzyme catalyses RNA(n) + a ribonucleoside 5'-triphosphate = RNA(n+1) + diphosphate. Its function is as follows. Promotes RNA polymerase assembly. Latches the N- and C-terminal regions of the beta' subunit thereby facilitating its interaction with the beta and alpha subunits. This is DNA-directed RNA polymerase subunit omega from Clostridium acetobutylicum (strain ATCC 824 / DSM 792 / JCM 1419 / IAM 19013 / LMG 5710 / NBRC 13948 / NRRL B-527 / VKM B-1787 / 2291 / W).